We begin with the raw amino-acid sequence, 466 residues long: Chromosomal replication initiator protein DnaA (466 aa).

The interval 1–86 (MSLSLWQQCL…EVGTKPVTQT (86 aa)) is domain I, interacts with DnaA modulators. Residues 86 to 129 (TLKTPVHNVVAPTQTTTAQPQRVAPAARSGWDNVPAPAEPTYRS) are domain II. The domain III, AAA+ region stretch occupies residues 130 to 346 (NVNVKHTFDN…GALNRVIANA (217 aa)). ATP is bound by residues Gly-174, Gly-176, Lys-177, and Thr-178. Residues 347-466 (NFTGRAITID…FSNLIRTLSS (120 aa)) are domain IV, binds dsDNA.

Belongs to the DnaA family. As to quaternary structure, oligomerizes as a right-handed, spiral filament on DNA at oriC.

The protein localises to the cytoplasm. Plays an essential role in the initiation and regulation of chromosomal replication. ATP-DnaA binds to the origin of replication (oriC) to initiate formation of the DNA replication initiation complex once per cell cycle. Binds the DnaA box (a 9 base pair repeat at the origin) and separates the double-stranded (ds)DNA. Forms a right-handed helical filament on oriC DNA; dsDNA binds to the exterior of the filament while single-stranded (ss)DNA is stabiized in the filament's interior. The ATP-DnaA-oriC complex binds and stabilizes one strand of the AT-rich DNA unwinding element (DUE), permitting loading of DNA polymerase. After initiation quickly degrades to an ADP-DnaA complex that is not apt for DNA replication. Binds acidic phospholipids. The polypeptide is Chromosomal replication initiator protein DnaA (Salmonella gallinarum (strain 287/91 / NCTC 13346)).